The sequence spans 916 residues: DNA repair endonuclease XPF (916 aa).

A helicase-like region spans residues 1–457 (MESGQPARRI…EVWMKFRKED (457 aa)). 2 leucine-zipper regions span residues 233–254 (LNAC…DLSL) and 270–298 (LDPL…LQYL). Lys-289 bears the N6-acetyllysine mark. Positions 460 to 487 (KRIRKSHKRPKDPQNKERASTKERTLKK) are disordered. A compositionally biased stretch (basic and acidic residues) spans 470-483 (KDPQNKERASTKER). The short motif at 486–491 (KKKKRK) is the Nuclear localization signal element. Residue Lys-500 forms a Glycyl lysine isopeptide (Lys-Gly) (interchain with G-Cter in SUMO2) linkage. Disordered stretches follow at residues 502 to 526 (EELE…ESCP) and 660 to 679 (TASA…EQNG). At Ser-521 the chain carries Phosphoserine. A nuclease region spans residues 658 to 813 (RGTASADVST…PSPHATAELF (156 aa)). The 81-residue stretch at 683 to 763 (SIVVDMREFR…RPVLLIEFDP (81 aa)) folds into the ERCC4 domain. Ser-764 carries the post-translational modification Phosphoserine. The tract at residues 837 to 905 (TLPESEKYNP…QLYDFIHTSF (69 aa)) is hhH2, dimerization with ERCC1. The residue at position 911 (Lys-911) is an N6-acetyllysine.

It belongs to the XPF family. In terms of assembly, heterodimer composed of ERCC1 and ERCC4/XPF. Interacts with SLX4/BTBD12; this interaction is direct and links the ERCC1-ERCC4/XPF complex to SLX4, which may coordinate the action of the structure-specific endonuclease during DNA repair. Requires Mg(2+) as cofactor. In terms of processing, acetylation at Lys-911 by KAT5 promotes interaction with ERCC1 by disrupting a salt bridge between Glu-907 and Lys-911, thereby exposing a second binding site for ERCC1. Deacetylated by SIRT1.

It localises to the nucleus. Its subcellular location is the chromosome. Its function is as follows. Catalytic component of a structure-specific DNA repair endonuclease responsible for the 5-prime incision during DNA repair, and which is essential for nucleotide excision repair (NER) and interstrand cross-link (ICL) repair. The chain is DNA repair endonuclease XPF from Homo sapiens (Human).